Here is a 349-residue protein sequence, read N- to C-terminus: Terpene synthase 2 (349 aa).

The DDxx(x)D/E motif signature appears at 84-89; that stretch reads DDLFDG. The short motif at 229–237 is the NDxxSxxxD/E motif element; it reads NDCVSYEKE.

The protein belongs to the terpene synthase family.

It catalyses the reaction (2E,6E)-farnesyl diphosphate = (3S)-(+)-asterisca-2(9),6-diene + diphosphate. It carries out the reaction (2E)-geranyl diphosphate = (Z)-beta-ocimene + diphosphate. The enzyme catalyses (2E)-geranyl diphosphate + H2O = linalool + diphosphate. Its function is as follows. Terpene synthase that converts its substrate farnesyl diphosphate (FPP) into the sesquiterpene (3S)-(+)-asterisca-2(9),6-diene. Is also able to convert geranyl diphosphate (GPP) into a mixture of monoterpenes including (Z)-beta-ocimene, allo-ocimene and linalool. This Dictyostelium discoideum (Social amoeba) protein is Terpene synthase 2.